Consider the following 320-residue polypeptide: Nuclease (320 aa).

Residue H155 is the Proton acceptor of the active site. N187 contacts Mg(2+). N-linked (GlcNAc...) asparagine glycosylation is present at N204. A disulfide bridge links C312 with C317.

This sequence belongs to the DNA/RNA non-specific endonuclease family. In terms of assembly, homodimer; as a result of non-covalent interactions and not through the disulfide linkages between the two monomers. Mg(2+) serves as cofactor. The cofactor is Mn(2+). Post-translationally, glycosylated.

The protein localises to the secreted. In terms of biological role, this enzyme has both RNase and DNase activity. This chain is Nuclease, found in Syncephalastrum racemosum (Filamentous fungus).